We begin with the raw amino-acid sequence, 324 residues long: Glyoxylate/hydroxypyruvate reductase B (324 aa).

Active-site residues include arginine 237 and glutamate 266. Histidine 285 serves as the catalytic Proton donor.

This sequence belongs to the D-isomer specific 2-hydroxyacid dehydrogenase family. GhrB subfamily. As to quaternary structure, homodimer.

It localises to the cytoplasm. It carries out the reaction glycolate + NADP(+) = glyoxylate + NADPH + H(+). The enzyme catalyses (R)-glycerate + NAD(+) = 3-hydroxypyruvate + NADH + H(+). The catalysed reaction is (R)-glycerate + NADP(+) = 3-hydroxypyruvate + NADPH + H(+). Catalyzes the NADPH-dependent reduction of glyoxylate and hydroxypyruvate into glycolate and glycerate, respectively. The chain is Glyoxylate/hydroxypyruvate reductase B from Escherichia coli O17:K52:H18 (strain UMN026 / ExPEC).